A 144-amino-acid polypeptide reads, in one-letter code: Large ribosomal subunit protein uL15 (144 aa).

The tract at residues 1 to 53 (MRLNTLSPAEGAKHAPKRVGRGIGSGLGKTAGRGHKGQNSRSGGGVRRGFEGG) is disordered. The segment covering 21–31 (RGIGSGLGKTA) has biased composition (gly residues).

The protein belongs to the universal ribosomal protein uL15 family. As to quaternary structure, part of the 50S ribosomal subunit.

Functionally, binds to the 23S rRNA. The polypeptide is Large ribosomal subunit protein uL15 (Serratia proteamaculans (strain 568)).